Consider the following 131-residue polypeptide: POU domain, class 3, transcription factor 3 (131 aa).

The region spanning 1 to 60 (FTQRRMKLGFTQADVGLALGTLYGNVFSQTTICRFEALQLSFKNMCKLKPLLNKWLEEAD) is the POU-specific domain. Positions 78–131 (KRKKRTSIEVSVKGALESHFLKCPKPSAQEITNLADSLQLEKEVVRVWFCNNLQ) form a DNA-binding region, homeobox.

Belongs to the POU transcription factor family. Class-3 subfamily. As to quaternary structure, homodimer. As to expression, brain.

Its subcellular location is the nucleus. In terms of biological role, transcription factor that acts synergistically with SOX11 and SOX4. Plays a role in neuronal development. Is implicated in an enhancer activity at the embryonic met-mesencephalic junction; the enhancer element contains the octamer motif (5'-ATTTGCAT-3'). In Sus scrofa (Pig), this protein is POU domain, class 3, transcription factor 3 (POU3F3).